Reading from the N-terminus, the 98-residue chain is NADH-ubiquinone oxidoreductase chain 4L (98 aa).

The next 3 helical transmembrane spans lie at 1–21, 29–49, and 61–81; these read MPYI…GTLM, SLLC…LLSL, and LILL…LIMI.

Belongs to the complex I subunit 4L family. Core subunit of respiratory chain NADH dehydrogenase (Complex I) which is composed of 45 different subunits.

It is found in the mitochondrion inner membrane. It catalyses the reaction a ubiquinone + NADH + 5 H(+)(in) = a ubiquinol + NAD(+) + 4 H(+)(out). Core subunit of the mitochondrial membrane respiratory chain NADH dehydrogenase (Complex I) which catalyzes electron transfer from NADH through the respiratory chain, using ubiquinone as an electron acceptor. Part of the enzyme membrane arm which is embedded in the lipid bilayer and involved in proton translocation. In Mammuthus primigenius (Siberian woolly mammoth), this protein is NADH-ubiquinone oxidoreductase chain 4L (MT-ND4L).